The primary structure comprises 62 residues: Photosystem II reaction center protein Z (62 aa).

The next 2 helical transmembrane spans lie at 8-28 and 41-61; these read AVFA…VVFA and FSGT…NSLI.

This sequence belongs to the PsbZ family. In terms of assembly, PSII is composed of 1 copy each of membrane proteins PsbA, PsbB, PsbC, PsbD, PsbE, PsbF, PsbH, PsbI, PsbJ, PsbK, PsbL, PsbM, PsbT, PsbY, PsbZ, Psb30/Ycf12, at least 3 peripheral proteins of the oxygen-evolving complex and a large number of cofactors. It forms dimeric complexes.

The protein localises to the plastid. Its subcellular location is the chloroplast thylakoid membrane. Its function is as follows. May control the interaction of photosystem II (PSII) cores with the light-harvesting antenna, regulates electron flow through the 2 photosystem reaction centers. PSII is a light-driven water plastoquinone oxidoreductase, using light energy to abstract electrons from H(2)O, generating a proton gradient subsequently used for ATP formation. The polypeptide is Photosystem II reaction center protein Z (Nicotiana sylvestris (Wood tobacco)).